The following is a 520-amino-acid chain: GMP synthase [glutamine-hydrolyzing] (520 aa).

Positions 9 to 202 (TVLIVDFGSQ…VHKIAGIKGD (194 aa)) constitute a Glutamine amidotransferase type-1 domain. The active-site Nucleophile is Cys86. Catalysis depends on residues His176 and Glu178. In terms of domain architecture, GMPS ATP-PPase spans 203 to 395 (WTMSAYRAKA…LGLPESFIGR (193 aa)). 230-236 (SGGVDSS) is an ATP binding site.

As to quaternary structure, homodimer.

It carries out the reaction XMP + L-glutamine + ATP + H2O = GMP + L-glutamate + AMP + diphosphate + 2 H(+). Its pathway is purine metabolism; GMP biosynthesis; GMP from XMP (L-Gln route): step 1/1. Catalyzes the synthesis of GMP from XMP. The chain is GMP synthase [glutamine-hydrolyzing] from Sinorhizobium fredii (strain NBRC 101917 / NGR234).